The following is a 311-amino-acid chain: Oligopeptide transport system permease protein OppC (311 aa).

The Cytoplasmic segment spans residues 1–48 (MTDYRTQPINQKNADFVEQVADRIEEMQLEGRSLWQDAKRRFFRNKAA). Residues 49 to 69 (VASLIILAFIIIFITVAPWFF) traverse the membrane as a helical segment. Residues 70 to 113 (PFTYEDTDWNMMSAAPTMEGYHFFGTDASGRDLLVRTAIGGRIS) lie on the Periplasmic side of the membrane. The ABC transmembrane type-1 domain maps to 110-299 (GRISLLVGIA…LTLFCFNFIG (190 aa)). Residues 114–134 (LLVGIAGAFISVTIGTIYGAI) form a helical membrane-spanning segment. Residues 135–146 (SGYVGGKTDMLM) are Cytoplasmic-facing. A helical transmembrane segment spans residues 147–169 (MRFLEILSSFPFMFFVILLVTLF). Residues 170-172 (GQN) lie on the Periplasmic side of the membrane. Residues 173 to 192 (IFLIFIAIGAIAWLGLARIV) form a helical membrane-spanning segment. Residues 193–222 (RGQTLSLKNKEFVEAAIVCGVPRRQIILKH) are Cytoplasmic-facing. A helical transmembrane segment spans residues 223–243 (IIPNVLGLVAVYASLEVPGLI). Residues 244–278 (LFESFLSFLGLGTQEPMSSWGALLSDGAAQMEVSP) lie on the Periplasmic side of the membrane. Residues 279–299 (WLLIFPAFFLCLTLFCFNFIG) form a helical membrane-spanning segment. The Cytoplasmic segment spans residues 300–311 (DGLRDALDPKDR).

It belongs to the binding-protein-dependent transport system permease family. OppBC subfamily. The complex is composed of two ATP-binding proteins (OppD and OppF), two transmembrane proteins (OppB and OppC) and a solute-binding protein (OppA).

Its subcellular location is the cell inner membrane. In terms of biological role, part of the ABC transporter complex OppABCDF involved in the uptake of oligopeptides. Probably responsible for the translocation of the substrate across the membrane. The chain is Oligopeptide transport system permease protein OppC (oppC) from Haemophilus influenzae (strain ATCC 51907 / DSM 11121 / KW20 / Rd).